The sequence spans 439 residues: Probable aspartic proteinase GIP2 (439 aa).

Residues 1-23 (MASSCCLHAILLCSLLFITSTTA) form the signal peptide. The Peptidase A1 domain maps to 47–420 (YLTQIQQRTP…DLARSRLGFT (374 aa)). N-linked (GlcNAc...) asparagine glycans are attached at residues N116, N280, N323, and N434.

This sequence belongs to the peptidase A1 family. As to quaternary structure, interacts with the Phytophtora parasitica xyloglucanase XEG1 and xyloglucanase-like XLP1. Possesses stronger binding affinity with XLP1, a truncated paralog of P.parasitica XEG1 which has no enzyme activity.

The protein localises to the secreted. It localises to the extracellular space. Its subcellular location is the apoplast. In terms of biological role, involved in plant defense against Phytophtora parasitica. Contributes positively to Nicotiana resistance against P.parasitica. Binds the P.parasitica xyloglucanase XEG1 and inhibits its cell wall degrading enzyme activity and its contribution as P.parasitica virulence factor. XEG1 acts as an important virulence factor during P.parasitica infection but also acts as a pathogen-associated molecular pattern (PAMP) in Nictotiana species, where it can trigger defense responses including cell death. Functionally, (Microbial infection) Possesses stronger binding affinity with XLP1, a truncated paralog of P.parasitica XEG1 which has no enzyme activity. Is impaired in its inhibitor activity towards the P.parasitica xyloglucanase XEG1 when hijacked by XLP1 binding. The protein is Probable aspartic proteinase GIP2 of Nicotiana benthamiana.